The chain runs to 365 residues: Chorismate synthase (365 aa).

Arg47 lines the NADP(+) pocket. Residues 124–126 (RAS), Gly287, 302–306 (KPTAT), and Arg328 contribute to the FMN site.

Belongs to the chorismate synthase family. Homotetramer. FMNH2 serves as cofactor.

It catalyses the reaction 5-O-(1-carboxyvinyl)-3-phosphoshikimate = chorismate + phosphate. Its pathway is metabolic intermediate biosynthesis; chorismate biosynthesis; chorismate from D-erythrose 4-phosphate and phosphoenolpyruvate: step 7/7. Functionally, catalyzes the anti-1,4-elimination of the C-3 phosphate and the C-6 proR hydrogen from 5-enolpyruvylshikimate-3-phosphate (EPSP) to yield chorismate, which is the branch point compound that serves as the starting substrate for the three terminal pathways of aromatic amino acid biosynthesis. This reaction introduces a second double bond into the aromatic ring system. This Prochlorococcus marinus (strain MIT 9312) protein is Chorismate synthase.